The sequence spans 426 residues: MSPVEKPVEVEKPKVPKRRFVGKKPQNITIKDGEQPLTKTINPARHIGRVMNQIPDDILNDKELNEAIKLLPSNYNFEIHKTIWNIRKTNCKRVALQMPEGLLIYSLIISDILEQFCQVETIVMGDVSYGACCIDDYTARSLDCDFIVHYAHSCLVPIDITSIKVLYVFVTINIDETHLINTIKLNFERGTQIAIFGTIQFNPTIHSVKAKLENDTEKPMYLIPPQTRPLSKGEVLGCTSARLDKEHIKAMIYIGDGRFHLESSMIHNPEIPAYRYDPYSRKFTREYYDHKQMIDVRKDAISTTKYATKVGLILGALGRQGNPITLDKLEKSLSEKGIQVVKIILSEILPQKLAMFDDVDAFVQVACPRLSIDWGYAFNKPLLTPYEAMVMLEKDTMGDEKVYPMDYYSKDGYGRGSIPDHSHLTT.

Residues Cys132, Cys238, and Cys367 each contribute to the [4Fe-4S] cluster site.

It belongs to the DPH1/DPH2 family. DPH1 subfamily. Component of the 2-(3-amino-3-carboxypropyl)histidine synthase complex composed of DPH1, DPH2, DPH3 and a NADH-dependent reductase, predominantly CBR1. [4Fe-4S] cluster is required as a cofactor.

It localises to the cytoplasm. It carries out the reaction L-histidyl-[translation elongation factor 2] + S-adenosyl-L-methionine = 2-[(3S)-amino-3-carboxypropyl]-L-histidyl-[translation elongation factor 2] + S-methyl-5'-thioadenosine + H(+). Its pathway is protein modification; peptidyl-diphthamide biosynthesis. Functionally, catalyzes the first step of diphthamide biosynthesis, a post-translational modification of histidine which occurs in elongation factor 2. DPH1 and DPH2 transfer a 3-amino-3-carboxypropyl (ACP) group from S-adenosyl-L-methionine (SAM) to a histidine residue, the reaction is assisted by a reduction system comprising DPH3 and a NADH-dependent reductase, predominantly CBR1. The chain is 2-(3-amino-3-carboxypropyl)histidine synthase subunit 1 (DPH1) from Candida albicans (strain SC5314 / ATCC MYA-2876) (Yeast).